Consider the following 216-residue polypeptide: Large ribosomal subunit protein uL3 (216 aa).

A disordered region spans residues 134 to 153; sequence RATHGNSRSHNVPGSIGMAQ. Gln153 carries the N5-methylglutamine modification.

It belongs to the universal ribosomal protein uL3 family. In terms of assembly, part of the 50S ribosomal subunit. Forms a cluster with proteins L14 and L19. Post-translationally, methylated by PrmB.

Functionally, one of the primary rRNA binding proteins, it binds directly near the 3'-end of the 23S rRNA, where it nucleates assembly of the 50S subunit. This Cupriavidus pinatubonensis (strain JMP 134 / LMG 1197) (Cupriavidus necator (strain JMP 134)) protein is Large ribosomal subunit protein uL3.